Reading from the N-terminus, the 214-residue chain is tRNA (guanine-N(7)-)-methyltransferase (214 aa).

Residues Glu43, Glu68, Asp95, and Asp117 each contribute to the S-adenosyl-L-methionine site. Asp117 is a catalytic residue. Substrate is bound by residues Lys121, Asp153, and 190–193 (TEYE).

This sequence belongs to the class I-like SAM-binding methyltransferase superfamily. TrmB family.

It catalyses the reaction guanosine(46) in tRNA + S-adenosyl-L-methionine = N(7)-methylguanosine(46) in tRNA + S-adenosyl-L-homocysteine. Its pathway is tRNA modification; N(7)-methylguanine-tRNA biosynthesis. In terms of biological role, catalyzes the formation of N(7)-methylguanine at position 46 (m7G46) in tRNA. In Staphylococcus aureus (strain COL), this protein is tRNA (guanine-N(7)-)-methyltransferase.